We begin with the raw amino-acid sequence, 87 residues long: Beta-defensin 109 (87 aa).

An N-terminal signal peptide occupies residues 1–22 (MRLHLLLLILLLFSILLSPVRG). 3 disulfides stabilise this stretch: C31–C59, C38–C53, and C43–C60.

This sequence belongs to the beta-defensin family.

It localises to the secreted. Its function is as follows. Has antibacterial activity. The protein is Beta-defensin 109 (DEFB109) of Pan troglodytes (Chimpanzee).